Here is a 657-residue protein sequence, read N- to C-terminus: tRNA 5-methylaminomethyl-2-thiouridine biosynthesis bifunctional protein MnmC (657 aa).

The segment at 1–233 (MPRGLILATP…KRDMTVAAFP (233 aa)) is tRNA (mnm(5)s(2)U34)-methyltransferase. An FAD-dependent cmnm(5)s(2)U34 oxidoreductase region spans residues 256 to 657 (LGAGLAGCSV…RALRHGKHAA (402 aa)).

It in the N-terminal section; belongs to the methyltransferase superfamily. tRNA (mnm(5)s(2)U34)-methyltransferase family. The protein in the C-terminal section; belongs to the DAO family. It depends on FAD as a cofactor.

Its subcellular location is the cytoplasm. The catalysed reaction is 5-aminomethyl-2-thiouridine(34) in tRNA + S-adenosyl-L-methionine = 5-methylaminomethyl-2-thiouridine(34) in tRNA + S-adenosyl-L-homocysteine + H(+). In terms of biological role, catalyzes the last two steps in the biosynthesis of 5-methylaminomethyl-2-thiouridine (mnm(5)s(2)U) at the wobble position (U34) in tRNA. Catalyzes the FAD-dependent demodification of cmnm(5)s(2)U34 to nm(5)s(2)U34, followed by the transfer of a methyl group from S-adenosyl-L-methionine to nm(5)s(2)U34, to form mnm(5)s(2)U34. In Ralstonia nicotianae (strain ATCC BAA-1114 / GMI1000) (Ralstonia solanacearum), this protein is tRNA 5-methylaminomethyl-2-thiouridine biosynthesis bifunctional protein MnmC.